The chain runs to 278 residues: Orotidine 5'-phosphate decarboxylase (278 aa).

K95 acts as the Proton donor in catalysis.

This sequence belongs to the OMP decarboxylase family. Type 2 subfamily.

The catalysed reaction is orotidine 5'-phosphate + H(+) = UMP + CO2. The protein operates within pyrimidine metabolism; UMP biosynthesis via de novo pathway; UMP from orotate: step 2/2. This chain is Orotidine 5'-phosphate decarboxylase, found in Corynebacterium glutamicum (strain R).